The sequence spans 349 residues: Probable G-protein coupled receptor 21 (349 aa).

Topologically, residues 1–32 (MNSTLDGNQSSHPFCLLAFGYLETVNFCLLEV) are extracellular. N-linked (GlcNAc...) asparagine glycans are attached at residues N2 and N8. The chain crosses the membrane as a helical span at residues 33 to 53 (LIIVFLTVLIISGNIIVIFVF). Topologically, residues 54–75 (HCAPLLNHHTTSYFIQTMAYAD) are cytoplasmic. A helical transmembrane segment spans residues 76–96 (LFVGVSCVVPSLSLLHHPLPV). The Extracellular segment spans residues 97–104 (EESLTCQI). Residues 105-125 (FGFVVSVLKSVSMASLACISI) traverse the membrane as a helical segment. Residues 126-147 (DRYIAITKPLTYNTLVTPWRLR) lie on the Cytoplasmic side of the membrane. Residues 148–168 (LCIFLIWLYSTLVFLPSFFHW) traverse the membrane as a helical segment. Over 169 to 191 (GKPGYHGDVFQWCAESWHTDSYF) the chain is Extracellular. Residues 192 to 212 (TLFIVMMLYAPAALIVCFTYF) form a helical membrane-spanning segment. Topologically, residues 213–252 (NIFRICQQHTKDISERQARFSSQSGETGEVQACPDKRYAM) are cytoplasmic. Residues 253-273 (VLFRITSVFYILWLPYIIYFL) traverse the membrane as a helical segment. Residues 274–283 (LESSTGHSNR) are Extracellular-facing. A helical transmembrane segment spans residues 284 to 304 (FASFLTTWLAISNSFCNCVIY). Residues 305–349 (SLSNSVFQRGLKRLSGAMCTSCASQTTANDPYTVRSKGPLNGCHI) are Cytoplasmic-facing.

It belongs to the G-protein coupled receptor 1 family. In terms of tissue distribution, not detected in the brain regions thalamus, putamen, caudate, frontal cortex, pons, hypothalamus, hippocampus.

Its subcellular location is the cell membrane. Functionally, orphan receptor. The polypeptide is Probable G-protein coupled receptor 21 (GPR21) (Homo sapiens (Human)).